The following is a 178-amino-acid chain: Probable chorismate pyruvate-lyase (178 aa).

3 residues coordinate substrate: arginine 67, leucine 105, and glutamate 164.

It belongs to the UbiC family.

Its subcellular location is the cytoplasm. It catalyses the reaction chorismate = 4-hydroxybenzoate + pyruvate. Its pathway is cofactor biosynthesis; ubiquinone biosynthesis. Functionally, removes the pyruvyl group from chorismate, with concomitant aromatization of the ring, to provide 4-hydroxybenzoate (4HB) for the ubiquinone pathway. The protein is Probable chorismate pyruvate-lyase of Methylobacillus flagellatus (strain ATCC 51484 / DSM 6875 / VKM B-1610 / KT).